The sequence spans 934 residues: Leucine--tRNA ligase 1 (934 aa).

The 'HIGH' region motif lies at 41–51 (PYTNSPMHVGH). The 'KMSKS' region motif lies at 616 to 620 (KMSKS). K619 lines the ATP pocket.

Belongs to the class-I aminoacyl-tRNA synthetase family.

The protein localises to the cytoplasm. It carries out the reaction tRNA(Leu) + L-leucine + ATP = L-leucyl-tRNA(Leu) + AMP + diphosphate. The sequence is that of Leucine--tRNA ligase 1 from Saccharolobus solfataricus (strain ATCC 35092 / DSM 1617 / JCM 11322 / P2) (Sulfolobus solfataricus).